The primary structure comprises 406 residues: Argininosuccinate synthase (406 aa).

Residues 13 to 21 (AYSGGLDTS) and A40 each bind ATP. L-citrulline is bound by residues Y91 and S96. Position 121 (G121) interacts with ATP. Residues T123, N127, and D128 each contribute to the L-aspartate site. Residue N127 coordinates L-citrulline. L-citrulline is bound by residues R131, S180, S189, E265, and Y277.

Belongs to the argininosuccinate synthase family. Type 1 subfamily. Homotetramer.

Its subcellular location is the cytoplasm. The enzyme catalyses L-citrulline + L-aspartate + ATP = 2-(N(omega)-L-arginino)succinate + AMP + diphosphate + H(+). It functions in the pathway amino-acid biosynthesis; L-arginine biosynthesis; L-arginine from L-ornithine and carbamoyl phosphate: step 2/3. This is Argininosuccinate synthase from Syntrophotalea carbinolica (strain DSM 2380 / NBRC 103641 / GraBd1) (Pelobacter carbinolicus).